The primary structure comprises 211 residues: tRNA (guanine-N(7)-)-methyltransferase (211 aa).

Glutamate 44, aspartate 69, aspartate 96, and aspartate 118 together coordinate S-adenosyl-L-methionine. Aspartate 118 is a catalytic residue. Lysine 122 lines the substrate pocket. The tract at residues 124–129 is interaction with RNA; sequence RHEKRR. Residues aspartate 154 and 191-194 each bind substrate; that span reads TEYE.

The protein belongs to the class I-like SAM-binding methyltransferase superfamily. TrmB family.

The enzyme catalyses guanosine(46) in tRNA + S-adenosyl-L-methionine = N(7)-methylguanosine(46) in tRNA + S-adenosyl-L-homocysteine. It functions in the pathway tRNA modification; N(7)-methylguanine-tRNA biosynthesis. Functionally, catalyzes the formation of N(7)-methylguanine at position 46 (m7G46) in tRNA. The polypeptide is tRNA (guanine-N(7)-)-methyltransferase (Streptococcus mutans serotype c (strain ATCC 700610 / UA159)).